A 97-amino-acid polypeptide reads, in one-letter code: Protein RADIALIS-like 6 (97 aa).

An SANT domain is found at 7-59 (SSISPWTFSQNKMFERALAVYDKDTPDRWHNVAKAVGGKTVEEVKRHYDILVE).

As to expression, expressed in the micropylar endosperm surrounding globular-stage embryos but no expression was detected elsewhere, including floral tissues.

The protein resides in the nucleus. Its function is as follows. Probable transcription factor. This chain is Protein RADIALIS-like 6 (RL6), found in Arabidopsis thaliana (Mouse-ear cress).